The sequence spans 293 residues: Cytidine deaminase (293 aa).

2 consecutive CMP/dCMP-type deaminase domains span residues D47–A166 and V186–V293. Substrate is bound at residue N88 to E90. Residue H101 participates in Zn(2+) binding. E103 functions as the Proton donor in the catalytic mechanism. C128 and C131 together coordinate Zn(2+).

This sequence belongs to the cytidine and deoxycytidylate deaminase family. In terms of assembly, homodimer. It depends on Zn(2+) as a cofactor.

It catalyses the reaction cytidine + H2O + H(+) = uridine + NH4(+). It carries out the reaction 2'-deoxycytidine + H2O + H(+) = 2'-deoxyuridine + NH4(+). In terms of biological role, this enzyme scavenges exogenous and endogenous cytidine and 2'-deoxycytidine for UMP synthesis. In Aeromonas hydrophila subsp. hydrophila (strain ATCC 7966 / DSM 30187 / BCRC 13018 / CCUG 14551 / JCM 1027 / KCTC 2358 / NCIMB 9240 / NCTC 8049), this protein is Cytidine deaminase.